The sequence spans 341 residues: 5-formaminoimidazole-4-carboxamide-1-(beta)-D-ribofuranosyl 5'-monophosphate synthetase (341 aa).

2 residues coordinate 5-amino-1-(5-phospho-beta-D-ribosyl)imidazole-4-carboxamide: histidine 10 and threonine 77. In terms of domain architecture, ATP-grasp spans aspartate 106–isoleucine 317. ATP is bound by residues aspartate 132–tyrosine 188 and glutamate 210. Position 238 (asparagine 238) interacts with 5-amino-1-(5-phospho-beta-D-ribosyl)imidazole-4-carboxamide. 2 residues coordinate Mg(2+): glutamate 277 and glutamate 290.

It belongs to the phosphohexose mutase family. Mg(2+) is required as a cofactor. The cofactor is Mn(2+).

It catalyses the reaction 5-amino-1-(5-phospho-beta-D-ribosyl)imidazole-4-carboxamide + formate + ATP = 5-formamido-1-(5-phospho-D-ribosyl)imidazole-4-carboxamide + ADP + phosphate. Its pathway is purine metabolism; IMP biosynthesis via de novo pathway; 5-formamido-1-(5-phospho-D-ribosyl)imidazole-4-carboxamide from 5-amino-1-(5-phospho-D-ribosyl)imidazole-4-carboxamide (formate route): step 1/1. Functionally, catalyzes the ATP- and formate-dependent formylation of 5-aminoimidazole-4-carboxamide-1-beta-d-ribofuranosyl 5'-monophosphate (AICAR) to 5-formaminoimidazole-4-carboxamide-1-beta-d-ribofuranosyl 5'-monophosphate (FAICAR) in the absence of folates. The polypeptide is 5-formaminoimidazole-4-carboxamide-1-(beta)-D-ribofuranosyl 5'-monophosphate synthetase (Cenarchaeum symbiosum (strain A)).